The chain runs to 422 residues: Lipase member M (422 aa).

The first 33 residues, 1-33 (MSEILSRVWTVSHRVEIWLLILVAYLLQRNVNS), serve as a signal peptide directing secretion. Asparagine 48 carries N-linked (GlcNAc...) asparagine glycosylation. An AB hydrolase-1 domain is found at 92 to 392 (PVVLLQHGLL…EWAHVDFIWG (301 aa)). The active-site Nucleophile is the serine 186. Cysteine 260 and cysteine 269 form a disulfide bridge. Catalysis depends on charge relay system residues aspartate 357 and histidine 386.

Belongs to the AB hydrolase superfamily. Lipase family.

The protein localises to the secreted. Its function is as follows. Plays a highly specific role in the last step of keratinocyte differentiation. May have an essential function in lipid metabolism of the most differentiated epidermal layers. This chain is Lipase member M (Lipm), found in Mus musculus (Mouse).